Here is a 153-residue protein sequence, read N- to C-terminus: Putative ubiquitin-conjugating enzyme E2 N-like (153 aa).

One can recognise a UBC core domain in the interval 3–150 (ELPHRIIKET…ARAWTRLYAM (148 aa)). Residue lysine 83 is modified to N6-acetyllysine.

It belongs to the ubiquitin-conjugating enzyme family. In terms of tissue distribution, expressed in epididymis (at protein level).

The sequence is that of Putative ubiquitin-conjugating enzyme E2 N-like (UBE2NL) from Homo sapiens (Human).